The following is a 249-amino-acid chain: Diaminopimelate epimerase (249 aa).

Substrate contacts are provided by N11 and N60. Catalysis depends on C69, which acts as the Proton donor. Substrate contacts are provided by residues 70–71, N164, and 182–183; these read GN and ER. C192 functions as the Proton acceptor in the catalytic mechanism. Substrate is bound at residue 193–194; the sequence is GT.

Belongs to the diaminopimelate epimerase family. As to quaternary structure, homodimer.

The protein localises to the cytoplasm. The enzyme catalyses (2S,6S)-2,6-diaminopimelate = meso-2,6-diaminopimelate. It functions in the pathway amino-acid biosynthesis; L-lysine biosynthesis via DAP pathway; DL-2,6-diaminopimelate from LL-2,6-diaminopimelate: step 1/1. Its function is as follows. Catalyzes the stereoinversion of LL-2,6-diaminopimelate (L,L-DAP) to meso-diaminopimelate (meso-DAP), a precursor of L-lysine and an essential component of the bacterial peptidoglycan. In Campylobacter jejuni subsp. jejuni serotype O:23/36 (strain 81-176), this protein is Diaminopimelate epimerase.